A 381-amino-acid polypeptide reads, in one-letter code: uncharacterized protein (381 aa).

2 helical membrane-spanning segments follow: residues 22 to 42 (GVLL…YLTA) and 246 to 266 (LIPE…LLVA).

Its subcellular location is the cell membrane. This is an uncharacterized protein from Mycobacterium tuberculosis (strain ATCC 25618 / H37Rv).